Consider the following 361-residue polypeptide: S-adenosylmethionine:tRNA ribosyltransferase-isomerase (361 aa).

The protein belongs to the QueA family. Monomer.

It is found in the cytoplasm. The catalysed reaction is 7-aminomethyl-7-carbaguanosine(34) in tRNA + S-adenosyl-L-methionine = epoxyqueuosine(34) in tRNA + adenine + L-methionine + 2 H(+). The protein operates within tRNA modification; tRNA-queuosine biosynthesis. In terms of biological role, transfers and isomerizes the ribose moiety from AdoMet to the 7-aminomethyl group of 7-deazaguanine (preQ1-tRNA) to give epoxyqueuosine (oQ-tRNA). The polypeptide is S-adenosylmethionine:tRNA ribosyltransferase-isomerase (Afipia carboxidovorans (strain ATCC 49405 / DSM 1227 / KCTC 32145 / OM5) (Oligotropha carboxidovorans)).